Here is a 180-residue protein sequence, read N- to C-terminus: MGLSISKLFQSLFGKREMRILMVGLDAAGKTTILYKLKLGEIVTTIPTIGFNVETVEYRNISFTVWDVGGQDKIRPLWRHYFQNTQGIIFVVDSNDRERISEAHEELQRMLNEDELRDALLLVFANKQDLPNAMNAAEITDKLGLHSLRHRQWYIQATCATSGDGLYEGLEWLSTNLKNQ.

Residue glycine 2 is the site of N-myristoyl glycine attachment. Residues 24–31 (GLDAAGKT), 67–71 (DVGGQ), and 126–129 (NKQD) contribute to the GTP site.

The protein belongs to the small GTPase superfamily. Arf family.

It localises to the golgi apparatus. The enzyme catalyses GTP + H2O = GDP + phosphate + H(+). GTP-binding protein involved in protein trafficking; may modulate vesicle budding and uncoating within the Golgi apparatus. The chain is ADP-ribosylation factor 1 (arf1) from Schizosaccharomyces pombe (strain 972 / ATCC 24843) (Fission yeast).